The sequence spans 496 residues: MAVSDVAGSQSRYDAVLVGAGIMSATLAALLHELDPELRLLMVERLQAPGLESSAAENNAGTGHAANCELNYTPLQPDGSVATAKALAINTAFERSLEFWASLTEKGKLLPQQFLHLVPHISVVFGDADLAFLHQRFQQLSALPAFASMQWSTDAAELAEWMPLVMEGRANAESVAATCIKRGTDVDFGLLTRAYVKSLQASGALELSCGCEVVHLHRLGKHRWNLDLKHSSGSRSVQTPFVFLGAGGGALPLLQRSGIPEAAAYAGFPVSGQWLVCSEPGLTARHHAKVYGKAKVGAPPMSVPHLDSRWIDGCRSLLFGPYAGFSSKFLKQGSRLDLLRSVRRSNFRSMLEVGFKNFDLVTYLLSELQQSEKDRFETLKQFLPNAQLNDWKLSVAGQRVQIIKGTAEGGRLQMGTEVVSAEDGSLAALLGASPGASTAVTVMLEVLQRCWSERMASESWQERLQKLLPSYGHDPNSDPLLLMQMRIRSNELLSFT.

Belongs to the MQO family. The cofactor is FAD.

The catalysed reaction is (S)-malate + a quinone = a quinol + oxaloacetate. Its pathway is carbohydrate metabolism; tricarboxylic acid cycle; oxaloacetate from (S)-malate (quinone route): step 1/1. This chain is Probable malate:quinone oxidoreductase, found in Prochlorococcus marinus (strain MIT 9303).